We begin with the raw amino-acid sequence, 671 residues long: Putative protein kinase C delta type homolog (671 aa).

Residues 1-136 (MMFTRAQVRK…ITNRRGAIKH (136 aa)) are disordered. The span at 14–27 (SNSSSQRPRSSGGS) shows a compositional bias: low complexity. Residues 57-101 (ARRDQYRDRDHYGKHSFELPRQHSKEEAYHRDRESSAGGVDRGER) show a composition bias toward basic and acidic residues. Residues 102–116 (SGIGGNGGGVTGGGV) are compositionally biased toward gly residues. 2 Phorbol-ester/DAG-type zinc fingers span residues 144–194 (GHRF…LGKC) and 216–266 (PHRF…ANLC). In terms of domain architecture, Protein kinase spans 343-601 (FHFLAVLGKG…AGDIADHIFF (259 aa)). ATP-binding positions include 349 to 357 (LGKGSFGKV) and Lys-372. Asp-467 functions as the Proton acceptor in the catalytic mechanism. One can recognise an AGC-kinase C-terminal domain in the interval 602 to 671 (RPIDWGLLEK…TYTNPHITLD (70 aa)).

It belongs to the protein kinase superfamily. AGC Ser/Thr protein kinase family. PKC subfamily.

The catalysed reaction is L-seryl-[protein] + ATP = O-phospho-L-seryl-[protein] + ADP + H(+). The enzyme catalyses L-threonyl-[protein] + ATP = O-phospho-L-threonyl-[protein] + ADP + H(+). The polypeptide is Putative protein kinase C delta type homolog (Drosophila melanogaster (Fruit fly)).